The chain runs to 464 residues: Secretion-regulating guanine nucleotide exchange factor (464 aa).

7 RCC1 repeats span residues 14 to 66 (AAAL…VVTD), 68 to 118 (GSLF…ILTE), 119 to 170 (NGQV…AATA), 172 to 229 (GTVF…SLTD), 230 to 282 (AGEL…AQTV), 283 to 349 (TGKV…LAVI), and 350 to 401 (GGVC…ALCQ). The segment covering 301 to 313 (VETREGWESEKQD) has biased composition (basic and acidic residues). The disordered stretch occupies residues 301–323 (VETREGWESEKQDPSLPGSGPQK). The tract at residues 411–464 (HPSVTSPSPDATKEARSQEAMEQERNQKERHAETSPQAQSDRFRNGGLVAETLE) is disordered. Residues 421–443 (ATKEARSQEAMEQERNQKERHAE) are compositionally biased toward basic and acidic residues. The residue at position 427 (S427) is a Phosphoserine.

In terms of assembly, interacts with SEC5. The interaction occurs only in the presence of magnesium or manganese and is stimulated by dCTP or GTP.

Its subcellular location is the cytoplasm. The protein localises to the nucleus. Functionally, probable guanine nucleotide exchange factor (GEF), which may be involved in the secretion process. This is Secretion-regulating guanine nucleotide exchange factor (SERGEF) from Bos taurus (Bovine).